The following is a 185-amino-acid chain: NADH-dependent FMN reductase AsuE2 (185 aa).

Over residues 1 to 13 (MSTHTARRAGATA) the composition is skewed to low complexity. Residues 1–24 (MSTHTARRAGATAGHDRDRGTEPG) form a disordered region. A compositionally biased stretch (basic and acidic residues) spans 14–24 (GHDRDRGTEPG).

The protein belongs to the non-flavoprotein flavin reductase family. Does not interact with AsuE1, suggesting a possible transient interaction between the two enzymes instead of formation of a stable complex.

The enzyme catalyses FMNH2 + NAD(+) = FMN + NADH + 2 H(+). It functions in the pathway antibiotic biosynthesis. Functionally, involved in the biosynthesis of the antibiotic asukamycin. When flavin concentration is low, AsuE2 assists the protoasukamycin 4-monooxygenase AsuE1 by providing a reduced form of flavin, enhancing AsuE1 activity. The polypeptide is NADH-dependent FMN reductase AsuE2 (Streptomyces nodosus subsp. asukaensis).